The chain runs to 189 residues: MIEAKDRLIDKMLESGAILFGHFVLSSGKESDYYINVKKVVTDPDALELMAGLIAGLVQRVGIDFDRVAGPELGAVPIATAVSLKTGKPLVIVRKKPKGYGTGSQIEGDVKEGDRILLVEDVTTTGGSVLRAAEVLESLGARIAAIAVVVDREEGAEGSITSKGYTFLPVIRVSELLERKETVKGRESD.

5-phospho-alpha-D-ribose 1-diphosphate is bound by residues R94, K95, K98, and 120–128 (EDVTTTGGS). Orotate-binding residues include T124 and R152.

It belongs to the purine/pyrimidine phosphoribosyltransferase family. PyrE subfamily. In terms of assembly, homodimer. Mg(2+) is required as a cofactor.

The enzyme catalyses orotidine 5'-phosphate + diphosphate = orotate + 5-phospho-alpha-D-ribose 1-diphosphate. It participates in pyrimidine metabolism; UMP biosynthesis via de novo pathway; UMP from orotate: step 1/2. Catalyzes the transfer of a ribosyl phosphate group from 5-phosphoribose 1-diphosphate to orotate, leading to the formation of orotidine monophosphate (OMP). This chain is Orotate phosphoribosyltransferase, found in Thermococcus gammatolerans (strain DSM 15229 / JCM 11827 / EJ3).